Consider the following 385-residue polypeptide: Anhydro-N-acetylmuramic acid kinase (385 aa).

12–19 (GTSLDGID) contacts ATP.

Belongs to the anhydro-N-acetylmuramic acid kinase family.

The catalysed reaction is 1,6-anhydro-N-acetyl-beta-muramate + ATP + H2O = N-acetyl-D-muramate 6-phosphate + ADP + H(+). Its pathway is amino-sugar metabolism; 1,6-anhydro-N-acetylmuramate degradation. It functions in the pathway cell wall biogenesis; peptidoglycan recycling. Catalyzes the specific phosphorylation of 1,6-anhydro-N-acetylmuramic acid (anhMurNAc) with the simultaneous cleavage of the 1,6-anhydro ring, generating MurNAc-6-P. Is required for the utilization of anhMurNAc either imported from the medium or derived from its own cell wall murein, and thus plays a role in cell wall recycling. In Bacillus thuringiensis (strain Al Hakam), this protein is Anhydro-N-acetylmuramic acid kinase.